Here is a 515-residue protein sequence, read N- to C-terminus: Bifunctional pantoate ligase/cytidylate kinase (515 aa).

The pantoate--beta-alanine ligase stretch occupies residues 1–279; it reads MKVVETVARL…VGSTRLIDNV (279 aa). An ATP-binding site is contributed by 31–38; the sequence is MGALHEGH. H38 acts as the Proton donor in catalysis. (R)-pantoate is bound at residue Q62. Q62 contributes to the beta-alanine binding site. 149–152 lines the ATP pocket; it reads GQKD. Residue Q155 coordinates (R)-pantoate. Residues V178 and 186 to 189 each bind ATP; that span reads LSSR. Residues 280 to 515 are cytidylate kinase; sequence VLGQHHERRP…LYRDKVGGSV (236 aa).

This sequence in the N-terminal section; belongs to the pantothenate synthetase family. In the C-terminal section; belongs to the cytidylate kinase family. Type 1 subfamily.

The protein resides in the cytoplasm. The catalysed reaction is (R)-pantoate + beta-alanine + ATP = (R)-pantothenate + AMP + diphosphate + H(+). It catalyses the reaction CMP + ATP = CDP + ADP. The enzyme catalyses dCMP + ATP = dCDP + ADP. It functions in the pathway cofactor biosynthesis; (R)-pantothenate biosynthesis; (R)-pantothenate from (R)-pantoate and beta-alanine: step 1/1. Functionally, catalyzes the condensation of pantoate with beta-alanine in an ATP-dependent reaction via a pantoyl-adenylate intermediate. Catalyzes the transfer of a phosphate group from ATP to either CMP or dCMP to form CDP or dCDP and ADP, respectively. In Gloeobacter violaceus (strain ATCC 29082 / PCC 7421), this protein is Bifunctional pantoate ligase/cytidylate kinase.